The following is a 438-amino-acid chain: ATP phosphoribosyltransferase regulatory subunit (438 aa).

The protein belongs to the class-II aminoacyl-tRNA synthetase family. HisZ subfamily. In terms of assembly, heteromultimer composed of HisG and HisZ subunits.

It localises to the cytoplasm. Its pathway is amino-acid biosynthesis; L-histidine biosynthesis; L-histidine from 5-phospho-alpha-D-ribose 1-diphosphate: step 1/9. Functionally, required for the first step of histidine biosynthesis. May allow the feedback regulation of ATP phosphoribosyltransferase activity by histidine. In Geobacter sulfurreducens (strain ATCC 51573 / DSM 12127 / PCA), this protein is ATP phosphoribosyltransferase regulatory subunit.